We begin with the raw amino-acid sequence, 160 residues long: Protein-export protein SecB (160 aa).

Belongs to the SecB family. In terms of assembly, homotetramer, a dimer of dimers. One homotetramer interacts with 1 SecA dimer.

It localises to the cytoplasm. Its function is as follows. One of the proteins required for the normal export of preproteins out of the cell cytoplasm. It is a molecular chaperone that binds to a subset of precursor proteins, maintaining them in a translocation-competent state. It also specifically binds to its receptor SecA. This chain is Protein-export protein SecB, found in Burkholderia lata (strain ATCC 17760 / DSM 23089 / LMG 22485 / NCIMB 9086 / R18194 / 383).